Reading from the N-terminus, the 366-residue chain is Tubulin-like protein CetZ (366 aa).

GTP-binding positions include 10–14 (QCGTK), 103–105 (GTG), E136, N163, and N181.

The protein belongs to the CetZ family.

The protein resides in the cytoplasm. In terms of biological role, involved in cell shape control. The protein is Tubulin-like protein CetZ of Pyrococcus furiosus (strain ATCC 43587 / DSM 3638 / JCM 8422 / Vc1).